Consider the following 673-residue polypeptide: DNA ligase (673 aa).

Residues 36 to 40 (DAEYD), 85 to 86 (SL), and Glu116 each bind NAD(+). The active-site N6-AMP-lysine intermediate is the Lys118. 4 residues coordinate NAD(+): Arg139, Glu176, Lys291, and Lys315. Residues Cys409, Cys412, Cys427, and Cys433 each contribute to the Zn(2+) site. The BRCT domain maps to 592-673 (RGEQPLAGRT…LQALLQEHGR (82 aa)).

Belongs to the NAD-dependent DNA ligase family. LigA subfamily. The cofactor is Mg(2+). Mn(2+) serves as cofactor.

It catalyses the reaction NAD(+) + (deoxyribonucleotide)n-3'-hydroxyl + 5'-phospho-(deoxyribonucleotide)m = (deoxyribonucleotide)n+m + AMP + beta-nicotinamide D-nucleotide.. DNA ligase that catalyzes the formation of phosphodiester linkages between 5'-phosphoryl and 3'-hydroxyl groups in double-stranded DNA using NAD as a coenzyme and as the energy source for the reaction. It is essential for DNA replication and repair of damaged DNA. The chain is DNA ligase from Alkalilimnicola ehrlichii (strain ATCC BAA-1101 / DSM 17681 / MLHE-1).